We begin with the raw amino-acid sequence, 114 residues long: Small ribosomal subunit protein bS6 (114 aa).

It belongs to the bacterial ribosomal protein bS6 family.

Binds together with bS18 to 16S ribosomal RNA. This Thermosynechococcus vestitus (strain NIES-2133 / IAM M-273 / BP-1) protein is Small ribosomal subunit protein bS6.